Reading from the N-terminus, the 341-residue chain is Small ribosomal subunit biogenesis GTPase RsgA (341 aa).

One can recognise a CP-type G domain in the interval arginine 112–leucine 268. GTP-binding positions include threonine 157–aspartate 160 and glycine 210–threonine 218. Residues cysteine 290, cysteine 295, histidine 297, and cysteine 303 each coordinate Zn(2+).

This sequence belongs to the TRAFAC class YlqF/YawG GTPase family. RsgA subfamily. Monomer. Associates with 30S ribosomal subunit, binds 16S rRNA. It depends on Zn(2+) as a cofactor.

It is found in the cytoplasm. In terms of biological role, one of several proteins that assist in the late maturation steps of the functional core of the 30S ribosomal subunit. Helps release RbfA from mature subunits. May play a role in the assembly of ribosomal proteins into the subunit. Circularly permuted GTPase that catalyzes slow GTP hydrolysis, GTPase activity is stimulated by the 30S ribosomal subunit. This is Small ribosomal subunit biogenesis GTPase RsgA from Xylella fastidiosa (strain Temecula1 / ATCC 700964).